The following is a 196-amino-acid chain: uncharacterized protein (196 aa).

It belongs to the NAD(P)H dehydrogenase (quinone) family.

This is an uncharacterized protein from Escherichia coli (strain K12).